A 132-amino-acid polypeptide reads, in one-letter code: MSMTDPIADLLVRIKNAAAVGKQTVKLPSSKIKVAIAQVLKDEGYITDLRVTATENNKSELEIVLKYFEGRPVIETLKRFSRSGLRQYRGKTELPKVLGGLGIAIISTSKGIMTDAQAREAGVGGEVLCFVA.

This sequence belongs to the universal ribosomal protein uS8 family. Part of the 30S ribosomal subunit. Contacts proteins S5 and S12.

Functionally, one of the primary rRNA binding proteins, it binds directly to 16S rRNA central domain where it helps coordinate assembly of the platform of the 30S subunit. The sequence is that of Small ribosomal subunit protein uS8 from Xanthomonas campestris pv. campestris (strain 8004).